The following is a 204-amino-acid chain: Somatotropin (204 aa).

A signal peptide spans 1 to 17; that stretch reads MDRVILLLSVVSLGVSS. Position 18 is a pyrrolidone carboxylic acid (Gln18). His36 contacts Zn(2+). An intrachain disulfide couples Cys69 to Cys177. Zn(2+) is bound at residue Glu186. Cys194 and Cys202 are oxidised to a cystine.

It belongs to the somatotropin/prolactin family.

Its subcellular location is the secreted. Functionally, growth hormone plays an important role in growth control and is involved in the regulation of several anabolic processes. Implicated as an osmoregulatory substance important for seawater adaptation. This is Somatotropin (gh) from Sebastes schlegelii (Korean rockfish).